Here is a 201-residue protein sequence, read N- to C-terminus: Natural cytotoxicity triggering receptor 3 (201 aa).

A signal peptide spans 1 to 18 (MAWMLLLILIMVHPGSCA). Residues 19-126 (LWVSQPPEIR…VGTGNGTRLV (108 aa)) enclose the Ig-like domain. Residues 19–135 (LWVSQPPEIR…VVEKEHPQLG (117 aa)) lie on the Extracellular side of the membrane. The cysteines at positions 39 and 108 are disulfide-linked. N-linked (GlcNAc...) asparagine glycans are attached at residues asparagine 42 and asparagine 121. The helical transmembrane segment at 136–156 (AGTVLLLRAGFYAVSFLSVAV) threads the bilayer. Residues 157 to 201 (GSTVYYQGKCLTWKGPRRQLPAVVPAPLPPPCGSSAQLLPPVPGG) are Cytoplasmic-facing.

It belongs to the natural cytotoxicity receptor (NCR) family. In terms of assembly, homodimer in the unliganted form. Interacts with CD3Z. Interacts with and is activated by binding to NCR3LG1. Interacts with and is activated by binding to BAG6. Interacts with and is inhibited by binding to LGALS3.

Its subcellular location is the cell membrane. Cell membrane receptor of natural killer/NK cells that is activated by binding of extracellular ligands including BAG6 and NCR3LG1. Stimulates NK cells cytotoxicity toward neighboring cells producing these ligands. It controls, for instance, NK cells cytotoxicity against tumor cells. Engagement of NCR3 by BAG6 also promotes myeloid dendritic cells (DC) maturation, both through killing DCs that did not acquire a mature phenotype, and inducing the release by NK cells of TNFA and IFNG that promote DC maturation. In Pan troglodytes (Chimpanzee), this protein is Natural cytotoxicity triggering receptor 3 (NCR3).